Consider the following 113-residue polypeptide: MESLLNRLYDALGLDAPEDEPLLIIDDGIQVYFNESDHTLEMCCPFMPLPDDILTLQHFLRLNYTSAVTIGADADNTALVALYRLPQTSTEEEALTGFELFISNVKQLKEHYA.

The protein belongs to the IpgE/SigE chaperone family. As to quaternary structure, homodimer or higher-order oligomers.

The protein localises to the cytoplasm. Molecular chaperone required for SopB/SigD stabilization and secretion. In Salmonella paratyphi A (strain ATCC 9150 / SARB42), this protein is Chaperone protein SigE (sigE).